The chain runs to 141 residues: MGNKESKYLEMCSDEAWLNIPNVFKCIFIRKLFYNKWLKYQEKKLEKRLRLLSFYHAKKDFIGIRDMLQTAPGGSYFITDNITEEFLMLVLKHPEDGSAEFTKLCLKGSCIMIDGYYYDNLDIFLAESPDLYKYPLIRYDR.

This sequence belongs to the asfivirus MGF 100 family.

Plays a role in virus cell tropism, and may be required for efficient virus replication in macrophages. In African swine fever virus (isolate Tick/Malawi/Lil 20-1/1983) (ASFV), this protein is Protein MGF 100-2L.